Reading from the N-terminus, the 499-residue chain is Citrinin biosynthesis cluster MFS transporter mrr1 (499 aa).

Positions 1–29 (MKEEIDAPVSTDASGTDLENARDQPSGEK) are disordered. The next 8 membrane-spanning stretches (helical) occupy residues 58 to 78 (SLITCIFSTLTIWVTFSSSVF), 95 to 115 (VMTLGTSLTVLGFTVGPLVWG), 124 to 144 (LKPLYIGYAIFIIFQVPVAVA), 155 to 175 (FFLGFFGTSALAIIPGALADF), 187 to 207 (LFSAATFVGPIFGPIIGGFIV), 215 to 235 (WTAWITMIPASFFGIIAFLTL), 291 to 311 (ILVCMTIYISLIYGILYLFFV), and 327 to 347 (GIAALPFLGILVGVLMGCLLV). N-linked (GlcNAc...) asparagine glycosylation occurs at Asn-361. Transmembrane regions (helical) follow at residues 370–390 (LPPMIVAAILLPIGLFWFGWT), 395–415 (ISWAPQAIAGAPIGMGILMIW), 443–463 (AVGAAFPLFATAMYHKLGVDW), and 467–487 (LLGFLSIAMIPIPVIFYFYGA).

It belongs to the major facilitator superfamily. CAR1 family.

Its subcellular location is the membrane. In terms of biological role, MFS transporter; part of the gene cluster that mediates the biosynthesis the mycotoxin citrinin, a hepato-nephrotoxic compound to humans due to inhibition of respiration complex III. In Monascus ruber (Mold), this protein is Citrinin biosynthesis cluster MFS transporter mrr1.